We begin with the raw amino-acid sequence, 161 residues long: Cyclic pyranopterin monophosphate synthase (161 aa).

Substrate is bound by residues 75–77 (LCH) and 113–114 (ME). Aspartate 128 is an active-site residue.

It belongs to the MoaC family. In terms of assembly, homohexamer; trimer of dimers.

It carries out the reaction (8S)-3',8-cyclo-7,8-dihydroguanosine 5'-triphosphate = cyclic pyranopterin phosphate + diphosphate. It participates in cofactor biosynthesis; molybdopterin biosynthesis. In terms of biological role, catalyzes the conversion of (8S)-3',8-cyclo-7,8-dihydroguanosine 5'-triphosphate to cyclic pyranopterin monophosphate (cPMP). The protein is Cyclic pyranopterin monophosphate synthase of Escherichia coli O139:H28 (strain E24377A / ETEC).